The following is a 612-amino-acid chain: MPEYRSKTSTHGRNMAGARALWRATGMRDGDFHKPIIAIANSFTQFVPGHVHLKDLGQLVAREIERVGGVAKEFDTIAVDDGIAMGHDGMLYSLPSREIIADSVEYMVNAHCADALVCISNCDKITPGMLMAALRLNIPTVFVSGGPMEAGKTKLAEHKLDLIDAMVIAADDSASDEKVAEFERSACPTCGSCSGMFTANSMNCLTEALGLSLPGNGTVVATHADREQLFLRAGRVAVELCHRWYGGEDPTALPRGIATFEAFENAMTLDIAMGGSTNTILHLLAAAQEGEVAFGMHDIDRLSKRVPQLCKVAPNTPKYHIEDVHRAGGIMAILGELARGGLLHTNAATVHARTLAEAIAQWDVTQTDDETVHTFYKAGPAGIPTQIAFSQATRWDSLDTDRSEGCIRDIAHAFSQEGGLAVLYGNIARDGCVVKTAGVDESIHVFEGTARVFESQDAAVKGILADEVVAGDVVVIRYEGPKGGPGMQEMLYPTSYLKSKGLGKQCALLTDGRFSGGTSGLSIGHASPEAAAGGAIGLVRDGDRILIDIPKRSINLLISDEELALRRAEQDAKGWKPVEVRPRKVTTALKAYALLATSADKGAVRDKALLDG.

Mg(2+) is bound at residue Asp-81. Cys-122 is a binding site for [2Fe-2S] cluster. Mg(2+) contacts are provided by Asp-123 and Lys-124. Position 124 is an N6-carboxylysine (Lys-124). [2Fe-2S] cluster is bound at residue Cys-193. Mg(2+) is bound at residue Glu-489. Ser-515 acts as the Proton acceptor in catalysis.

It belongs to the IlvD/Edd family. As to quaternary structure, homodimer. Requires [2Fe-2S] cluster as cofactor. It depends on Mg(2+) as a cofactor.

It carries out the reaction (2R)-2,3-dihydroxy-3-methylbutanoate = 3-methyl-2-oxobutanoate + H2O. The enzyme catalyses (2R,3R)-2,3-dihydroxy-3-methylpentanoate = (S)-3-methyl-2-oxopentanoate + H2O. It participates in amino-acid biosynthesis; L-isoleucine biosynthesis; L-isoleucine from 2-oxobutanoate: step 3/4. The protein operates within amino-acid biosynthesis; L-valine biosynthesis; L-valine from pyruvate: step 3/4. Functionally, functions in the biosynthesis of branched-chain amino acids. Catalyzes the dehydration of (2R,3R)-2,3-dihydroxy-3-methylpentanoate (2,3-dihydroxy-3-methylvalerate) into 2-oxo-3-methylpentanoate (2-oxo-3-methylvalerate) and of (2R)-2,3-dihydroxy-3-methylbutanoate (2,3-dihydroxyisovalerate) into 2-oxo-3-methylbutanoate (2-oxoisovalerate), the penultimate precursor to L-isoleucine and L-valine, respectively. This Xanthomonas euvesicatoria pv. vesicatoria (strain 85-10) (Xanthomonas campestris pv. vesicatoria) protein is Dihydroxy-acid dehydratase.